The following is a 356-amino-acid chain: Heparan sulfate 2-O-sulfotransferase 1 (356 aa).

Topologically, residues 1–11 (MGLLRIMMPPK) are cytoplasmic. A helical; Signal-anchor for type II membrane protein membrane pass occupies residues 12–28 (LQLLAVVAFAVAMLFLE). Residues 24–51 (MLFLENQIQKLEESRSKLERAIARHEVR) are a coiled coil. Over 29 to 356 (NQIQKLEESR…FYEKIYPKSN (328 aa)) the chain is Lumenal. Adenosine 3',5'-bisphosphate contacts are provided by K83, T84, A85, S86, T87, and S88. Residues N108 and N127 are each glycosylated (N-linked (GlcNAc...) asparagine). Catalysis depends on residues H140 and H142. The adenosine 3',5'-bisphosphate site is built by R164 and S172. Intrachain disulfides connect C201-C209 and C222-C228. The adenosine 3',5'-bisphosphate site is built by Y279, S285, T290, and K293.

This sequence belongs to the sulfotransferase 3 family. In terms of assembly, homotrimer. Interacts with the C5-epimerase GLCE. In terms of processing, N-glycosylated.

The protein localises to the golgi apparatus membrane. Its function is as follows. Catalyzes the transfer of a sulfo group from 3'-phospho-5'-adenylyl sulfate (PAPS) to the 2-OH position of iduronic acid (IdoA) or glucuronic acid (GlcA) within the heparan sulfate (HS) chain and participates in HS biosynthesis. Required for metanephric development of kidney formation, suggesting that 2-O-sulfation within HS is essential for signaling between ureteric bud and metanephric mesenchyme. The sequence is that of Heparan sulfate 2-O-sulfotransferase 1 from Pongo abelii (Sumatran orangutan).